The following is an 85-amino-acid chain: MPKLEMMLLVLLILPLCYIDAVGPLPPWNMEDEIIEHWQKLHCYEISDLTPWILCSPEPLCGGKGCCAQEVCDCSGPACTCPPCL.

The first 21 residues, Met1–Ala21, serve as a signal peptide directing secretion. A propeptide spanning residues Val22–Lys40 is cleaved from the precursor.

This sequence belongs to the conotoxin D superfamily. In terms of processing, contains 5 disulfide bonds. As to expression, expressed by the venom duct.

Its subcellular location is the secreted. Its function is as follows. Probable neurotoxin. In Conus litteratus (Lettered cone), this protein is Conotoxin Lt28.3.